The chain runs to 421 residues: WD repeat and SOCS box-containing protein 1 (421 aa).

5 WD repeats span residues 124–165 (SRCV…LLLN), 168–208 (DHIE…NMVK), 212–251 (AHQN…MIRK), 254–293 (GHHH…LLME), and 309–346 (ANDR…DCPV). The region spanning 372-421 (DGSVYFWATPRQVPSLQHICRMSIRRVMSTQEVQKLPVPSKILAFLSYRG) is the SOCS box domain.

In terms of assembly, interacts with DIO2. Component of the probable ECS(WSB1) E3 ubiquitin-protein ligase complex which contains CUL5, RNF7/RBX2, Elongin BC complex and WSB1. Component of a probable ECS-like E3 ubiquitin-protein ligase complex which contains CUL5, RBX1, Elongin BC complex and WSB1. Interacts with CUL5, RNF7, ELOB and ELOC. Binds to HIPK2 through WD40 repeats.

It participates in protein modification; protein ubiquitination. Its function is as follows. Probable substrate-recognition component of a SCF-like ECS (Elongin-Cullin-SOCS-box protein) E3 ubiquitin ligase complex which mediates the ubiquitination and subsequent proteasomal degradation of target proteins. Recognizes type II iodothyronine deiodinase/DIO2. Confers constitutive instability to HIPK2 through proteasomal degradation. This Mus musculus (Mouse) protein is WD repeat and SOCS box-containing protein 1 (Wsb1).